A 60-amino-acid chain; its full sequence is Large ribosomal subunit protein uL30 (60 aa).

The protein belongs to the universal ribosomal protein uL30 family. Part of the 50S ribosomal subunit.

The protein is Large ribosomal subunit protein uL30 of Histophilus somni (strain 2336) (Haemophilus somnus).